Consider the following 103-residue polypeptide: Large ribosomal subunit protein uL24 (103 aa).

The protein belongs to the universal ribosomal protein uL24 family. As to quaternary structure, part of the 50S ribosomal subunit.

Functionally, one of two assembly initiator proteins, it binds directly to the 5'-end of the 23S rRNA, where it nucleates assembly of the 50S subunit. In terms of biological role, one of the proteins that surrounds the polypeptide exit tunnel on the outside of the subunit. This Actinobacillus pleuropneumoniae serotype 3 (strain JL03) protein is Large ribosomal subunit protein uL24.